Here is a 942-residue protein sequence, read N- to C-terminus: UvrABC system protein A (942 aa).

31 to 38 (GLSGSGKS) serves as a coordination point for ATP. A C4-type zinc finger spans residues 253-280 (CSECGYSLPELEPRLFSFNNPAGACPTC). ABC transporter domains are found at residues 310 to 586 (WDRR…EASI) and 606 to 936 (YDAN…RFLT). Residue 639–646 (GVSGSGKS) coordinates ATP. A C4-type zinc finger spans residues 739–765 (CEACQGDGVIKVEMHFLPDVYVPCDHC).

Belongs to the ABC transporter superfamily. UvrA family. As to quaternary structure, forms a heterotetramer with UvrB during the search for lesions.

The protein localises to the cytoplasm. The UvrABC repair system catalyzes the recognition and processing of DNA lesions. UvrA is an ATPase and a DNA-binding protein. A damage recognition complex composed of 2 UvrA and 2 UvrB subunits scans DNA for abnormalities. When the presence of a lesion has been verified by UvrB, the UvrA molecules dissociate. The polypeptide is UvrABC system protein A (Haemophilus ducreyi (strain 35000HP / ATCC 700724)).